The sequence spans 253 residues: Zinc finger protein JAGGED (253 aa).

The interval 1 to 46 is disordered; that stretch reads MRHEENYLDLNNLPDDFSKDGNKQALEEGSSSGQRKKKGSKEGKDE. Over residues 16–26 the composition is skewed to basic and acidic residues; that stretch reads DFSKDGNKQAL. The C2H2-type zinc-finger motif lies at 51 to 73; it reads YECRFCSLKFCKSQALGGHMNRH.

Interacts with GATA18/HAN. In terms of tissue distribution, expressed in the emerging leaf, sepal, petal, stamen and carpel primordia. Not expressed in the apical shoot meristem (SAM).

Its subcellular location is the nucleus. Its function is as follows. Controls the morphogenesis of lateral organs. Functions in lateral organ shape and is sufficient to induce proliferation and growth of lateral organ tissue. Is necessary and sufficient for bract formation, but its expression is excluded from the cryptic bract, which could be a cause of bractless flowers in Arabidopsis. Participates with FIL and YAB3 in regulating valve margin development. Functions with JGL to define stamen and carpel shape. Functions with AS1 and AS2 in the sepal and petal primordia to repress boundary-specifying genes for normal development of the organs. This Arabidopsis thaliana (Mouse-ear cress) protein is Zinc finger protein JAGGED (JAG).